Here is a 508-residue protein sequence, read N- to C-terminus: Aspartic proteinase yapsin-3 (508 aa).

The signal sequence occupies residues 1–20 (MKLQLAAVATLAVLTSPAFG). A propeptide spanning residues 21-47 (RVLPDGKYVKIPFTKKKNGDNGELSKR) is cleaved from the precursor. The region spanning 63–394 (YSVELAIGTP…DLDNYEISLA (332 aa)) is the Peptidase A1 domain. A glycan (N-linked (GlcNAc...) asparagine) is linked at asparagine 75. Residue aspartate 81 is part of the active site. N-linked (GlcNAc...) asparagine glycosylation is found at asparagine 120, asparagine 160, asparagine 163, and asparagine 275. Aspartate 288 is an active-site residue. N-linked (GlcNAc...) asparagine glycosylation is found at asparagine 309, asparagine 328, asparagine 367, asparagine 422, asparagine 445, and asparagine 462. Low complexity predominate over residues 448–468 (STATTTRSTTTKKTNSTTTAK). Residues 448 to 476 (STATTTRSTTTKKTNSTTTAKSTHKSKRA) form a disordered region. A lipid anchor (GPI-anchor amidated asparagine) is attached at asparagine 483. Residues 484-508 (SASSIRSTLGLLLVPSLLILSVFFS) constitute a propeptide, removed in mature form.

Belongs to the peptidase A1 family. Can also be processed to start at Phe-54.

The protein localises to the cell membrane. Cleaves proteins C-terminally to mono- and paired-basic residues. Required for cell wall integrity. The chain is Aspartic proteinase yapsin-3 (YPS3) from Saccharomyces cerevisiae (strain ATCC 204508 / S288c) (Baker's yeast).